The sequence spans 209 residues: Orotate phosphoribosyltransferase (209 aa).

Residues arginine 96, lysine 100, histidine 102, and 122-130 (EDLISTGGS) each bind 5-phospho-alpha-D-ribose 1-diphosphate. Serine 126 is an orotate binding site.

Belongs to the purine/pyrimidine phosphoribosyltransferase family. PyrE subfamily. In terms of assembly, homodimer. The cofactor is Mg(2+).

It carries out the reaction orotidine 5'-phosphate + diphosphate = orotate + 5-phospho-alpha-D-ribose 1-diphosphate. It functions in the pathway pyrimidine metabolism; UMP biosynthesis via de novo pathway; UMP from orotate: step 1/2. Its function is as follows. Catalyzes the transfer of a ribosyl phosphate group from 5-phosphoribose 1-diphosphate to orotate, leading to the formation of orotidine monophosphate (OMP). This chain is Orotate phosphoribosyltransferase, found in Streptococcus pyogenes serotype M1.